A 331-amino-acid chain; its full sequence is Glycerol-3-phosphate dehydrogenase [NAD(P)+] (331 aa).

The NADPH site is built by W11, R30, and K105. K105, G134, and S136 together coordinate sn-glycerol 3-phosphate. A138 is a binding site for NADPH. K189, D242, S252, R253, and N254 together coordinate sn-glycerol 3-phosphate. K189 functions as the Proton acceptor in the catalytic mechanism. Position 253 (R253) interacts with NADPH. NADPH-binding residues include V277 and E279.

Belongs to the NAD-dependent glycerol-3-phosphate dehydrogenase family.

The protein resides in the cytoplasm. It carries out the reaction sn-glycerol 3-phosphate + NAD(+) = dihydroxyacetone phosphate + NADH + H(+). The enzyme catalyses sn-glycerol 3-phosphate + NADP(+) = dihydroxyacetone phosphate + NADPH + H(+). The protein operates within membrane lipid metabolism; glycerophospholipid metabolism. In terms of biological role, catalyzes the reduction of the glycolytic intermediate dihydroxyacetone phosphate (DHAP) to sn-glycerol 3-phosphate (G3P), the key precursor for phospholipid synthesis. The polypeptide is Glycerol-3-phosphate dehydrogenase [NAD(P)+] (Janthinobacterium sp. (strain Marseille) (Minibacterium massiliensis)).